Reading from the N-terminus, the 187-residue chain is dITP/XTP pyrophosphatase (187 aa).

7–12 (TGNKHK) provides a ligand contact to substrate. 2 residues coordinate Mg(2+): Glu-36 and Asp-64. Asp-64 serves as the catalytic Proton acceptor. Substrate contacts are provided by residues Ala-65, 140–143 (FAFD), Lys-163, and 168–169 (HR).

Belongs to the HAM1 NTPase family. Homodimer. The cofactor is Mg(2+).

It catalyses the reaction XTP + H2O = XMP + diphosphate + H(+). The enzyme catalyses dITP + H2O = dIMP + diphosphate + H(+). It carries out the reaction ITP + H2O = IMP + diphosphate + H(+). In terms of biological role, pyrophosphatase that catalyzes the hydrolysis of nucleoside triphosphates to their monophosphate derivatives, with a high preference for the non-canonical purine nucleotides XTP (xanthosine triphosphate), dITP (deoxyinosine triphosphate) and ITP. Seems to function as a house-cleaning enzyme that removes non-canonical purine nucleotides from the nucleotide pool, thus preventing their incorporation into DNA/RNA and avoiding chromosomal lesions. This chain is dITP/XTP pyrophosphatase, found in Methanothermobacter marburgensis (strain ATCC BAA-927 / DSM 2133 / JCM 14651 / NBRC 100331 / OCM 82 / Marburg) (Methanobacterium thermoautotrophicum).